The primary structure comprises 428 residues: Trigger factor (428 aa).

The PPIase FKBP-type domain occupies 163-248 (GDMVVIDYKG…VHEIKEKELP (86 aa)).

Belongs to the FKBP-type PPIase family. Tig subfamily.

It localises to the cytoplasm. It catalyses the reaction [protein]-peptidylproline (omega=180) = [protein]-peptidylproline (omega=0). Its function is as follows. Involved in protein export. Acts as a chaperone by maintaining the newly synthesized protein in an open conformation. Functions as a peptidyl-prolyl cis-trans isomerase. In Alkaliphilus metalliredigens (strain QYMF), this protein is Trigger factor.